A 231-amino-acid chain; its full sequence is Two-component response regulator ARR3 (231 aa).

Positions 34–161 constitute a Response regulatory domain; that stretch reads HVLAVDDSLV…DVKRLRSYLT (128 aa). Aspartate 94 is subject to 4-aspartylphosphate. The interval 170–231 is disordered; it reads GNKRKLTTPP…DSPMRSPGLA (62 aa). Residues 185–199 are compositionally biased toward low complexity; that stretch reads SATSSMESSDSTVES. The span at 210-221 shows a compositional bias: polar residues; the sequence is LTMSPESATSLV.

It belongs to the ARR family. Type-A subfamily. Post-translationally, two-component system major event consists of a His-to-Asp phosphorelay between a sensor histidine kinase (HK) and a response regulator (RR). In plants, the His-to-Asp phosphorelay involves an additional intermediate named Histidine-containing phosphotransfer protein (HPt). This multistep phosphorelay consists of a His-Asp-His-Asp sequential transfer of a phosphate group between first a His and an Asp of the HK protein, followed by the transfer to a conserved His of the HPt protein and finally the transfer to an Asp in the receiver domain of the RR protein. As to expression, predominantly expressed in roots.

The protein localises to the nucleus. Its function is as follows. Functions as a response regulator involved in His-to-Asp phosphorelay signal transduction system. Phosphorylation of the Asp residue in the receiver domain activates the ability of the protein to promote the transcription of target genes. Type-A response regulators seem to act as negative regulators of the cytokinin signaling. The chain is Two-component response regulator ARR3 (ARR3) from Arabidopsis thaliana (Mouse-ear cress).